A 206-amino-acid polypeptide reads, in one-letter code: Ribonuclease HII (206 aa).

The region spanning 18 to 206 is the RNase H type-2 domain; it reads LRIAGVDEVG…PVHNILYQEK (189 aa). A divalent metal cation contacts are provided by D24, E25, and D115.

Belongs to the RNase HII family. Requires Mn(2+) as cofactor. Mg(2+) is required as a cofactor.

It is found in the cytoplasm. The catalysed reaction is Endonucleolytic cleavage to 5'-phosphomonoester.. Functionally, endonuclease that specifically degrades the RNA of RNA-DNA hybrids. The polypeptide is Ribonuclease HII (Dinoroseobacter shibae (strain DSM 16493 / NCIMB 14021 / DFL 12)).